The chain runs to 463 residues: Zinc finger protein PLAGL1 (463 aa).

7 C2H2-type zinc fingers span residues 4-26 (YPCQ…NYSH), 32-56 (YKCL…MATH), 62-84 (HQCA…LQTH), 91-113 (FGCE…LALH), 120-142 (LTCG…LKAH), 156-178 (HQCD…LVVH), and 184-207 (FLCQ…KKTH). Residues 285-310 (LHPVAPPTSPPQPLQNHKYNTSSTSY) are disordered. A compositionally biased stretch (pro residues) spans 287–297 (PVAPPTSPPQP). The segment covering 298-310 (LQNHKYNTSSTSY) has biased composition (polar residues).

It belongs to the krueppel C2H2-type zinc-finger protein family. In terms of assembly, interacts with THRSP.

The protein resides in the nucleus. Functionally, acts as a transcriptional activator. Involved in the transcriptional regulation of type 1 receptor for pituitary adenylate cyclase-activating polypeptide. The sequence is that of Zinc finger protein PLAGL1 (PLAGL1) from Sus scrofa (Pig).